Consider the following 130-residue polypeptide: Small ribosomal subunit protein uS9 (130 aa).

This sequence belongs to the universal ribosomal protein uS9 family.

The sequence is that of Small ribosomal subunit protein uS9 from Cupriavidus pinatubonensis (strain JMP 134 / LMG 1197) (Cupriavidus necator (strain JMP 134)).